Here is a 309-residue protein sequence, read N- to C-terminus: 2-phospho-L-lactate transferase (309 aa).

7,8-didemethyl-8-hydroxy-5-deazariboflavin-binding residues include D50 and K89.

This sequence belongs to the CofD family. As to quaternary structure, homodimer. Mg(2+) serves as cofactor.

The catalysed reaction is (2S)-lactyl-2-diphospho-5'-guanosine + 7,8-didemethyl-8-hydroxy-5-deazariboflavin = oxidized coenzyme F420-0 + GMP + H(+). Its pathway is cofactor biosynthesis; coenzyme F420 biosynthesis. Its function is as follows. Catalyzes the transfer of the 2-phospholactate moiety from (2S)-lactyl-2-diphospho-5'-guanosine to 7,8-didemethyl-8-hydroxy-5-deazariboflavin (FO) with the formation of oxidized coenzyme F420-0 and GMP. The protein is 2-phospho-L-lactate transferase of Methanococcus maripaludis (strain C7 / ATCC BAA-1331).